Reading from the N-terminus, the 110-residue chain is MSDTLTRLAQVLEERKDAAADSSYVASLYHKGLNKILEKVGEESVETIIAAKDAAISGDCSDVIYETADLWFHTLVMLAQLGQHPQAVLDELDRRFGLSGHAEKASRPSA.

This sequence belongs to the PRA-PH family.

Its subcellular location is the cytoplasm. It carries out the reaction 1-(5-phospho-beta-D-ribosyl)-ATP + H2O = 1-(5-phospho-beta-D-ribosyl)-5'-AMP + diphosphate + H(+). It participates in amino-acid biosynthesis; L-histidine biosynthesis; L-histidine from 5-phospho-alpha-D-ribose 1-diphosphate: step 2/9. The polypeptide is Phosphoribosyl-ATP pyrophosphatase (Pseudomonas fluorescens (strain ATCC BAA-477 / NRRL B-23932 / Pf-5)).